A 284-amino-acid chain; its full sequence is Bifunctional protein FolD (284 aa).

NADP(+) is bound by residues 163–165 (GRS) and Ser-188.

This sequence belongs to the tetrahydrofolate dehydrogenase/cyclohydrolase family. As to quaternary structure, homodimer.

It carries out the reaction (6R)-5,10-methylene-5,6,7,8-tetrahydrofolate + NADP(+) = (6R)-5,10-methenyltetrahydrofolate + NADPH. The enzyme catalyses (6R)-5,10-methenyltetrahydrofolate + H2O = (6R)-10-formyltetrahydrofolate + H(+). It functions in the pathway one-carbon metabolism; tetrahydrofolate interconversion. In terms of biological role, catalyzes the oxidation of 5,10-methylenetetrahydrofolate to 5,10-methenyltetrahydrofolate and then the hydrolysis of 5,10-methenyltetrahydrofolate to 10-formyltetrahydrofolate. The polypeptide is Bifunctional protein FolD (Lactococcus lactis subsp. lactis (strain IL1403) (Streptococcus lactis)).